The chain runs to 465 residues: Ribosomal protein uS12 methylthiotransferase RimO (465 aa).

Residues 1–117 enclose the MTTase N-terminal domain; sequence MKVGFISLGC…IVDICEGMPP (117 aa). Residues Cys-10, Cys-46, Cys-80, Cys-150, Cys-154, and Cys-157 each contribute to the [4Fe-4S] cluster site. The Radical SAM core domain occupies 136 to 369; sequence ATPRHFAYMK…AIQRKIARAR (234 aa). Positions 371–442 constitute a TRAM domain; it reads RGLVGKEVPV…DYDVVGTLLA (72 aa).

The protein belongs to the methylthiotransferase family. RimO subfamily. [4Fe-4S] cluster serves as cofactor.

It is found in the cytoplasm. It carries out the reaction L-aspartate(89)-[ribosomal protein uS12]-hydrogen + (sulfur carrier)-SH + AH2 + 2 S-adenosyl-L-methionine = 3-methylsulfanyl-L-aspartate(89)-[ribosomal protein uS12]-hydrogen + (sulfur carrier)-H + 5'-deoxyadenosine + L-methionine + A + S-adenosyl-L-homocysteine + 2 H(+). In terms of biological role, catalyzes the methylthiolation of an aspartic acid residue of ribosomal protein uS12. The sequence is that of Ribosomal protein uS12 methylthiotransferase RimO from Solibacter usitatus (strain Ellin6076).